Here is a 335-residue protein sequence, read N- to C-terminus: Transcription factor bHLH63 (335 aa).

The tract at residues methionine 110 to valine 160 is disordered. One can recognise a bHLH domain in the interval glutamine 178 to leucine 228.

As to quaternary structure, homodimer. Interacts with IBH1. Binds reversibly to CRY2 after blue light illumination. As to expression, expressed constitutively in roots, leaves, and stems.

The protein localises to the nucleus. Transcription factor that binds DNA to G box 5'-CACGTG-3' and, to a lower extent, to E-box 5'-CANNTG-3' in vitro. Binds to chromatin DNA of the FT gene and promotes its expression, and thus triggers flowering in response to blue light. This chain is Transcription factor bHLH63 (BHLH63), found in Arabidopsis thaliana (Mouse-ear cress).